We begin with the raw amino-acid sequence, 226 residues long: ATP synthase F(0) complex subunit a (226 aa).

The next 6 helical transmembrane spans lie at 6–26 (FASFITPMILGLPLVTLIVLF), 68–88 (WTLMLMSLILFIGSTNLLGLL), 97–117 (QLSMNLGMAISLWAGAVITGF), 138–158 (IPMLVIIETISLFIQPMALAV), 164–184 (ITAGHLLIHLIGGATLALMSI), and 200–222 (TILEFAVAMIQAYVFTLLVSLYL).

Belongs to the ATPase A chain family. In terms of assembly, component of the ATP synthase complex composed at least of ATP5F1A/subunit alpha, ATP5F1B/subunit beta, ATP5MC1/subunit c (homooctomer), MT-ATP6/subunit a, MT-ATP8/subunit 8, ATP5ME/subunit e, ATP5MF/subunit f, ATP5MG/subunit g, ATP5MK/subunit k, ATP5MJ/subunit j, ATP5F1C/subunit gamma, ATP5F1D/subunit delta, ATP5F1E/subunit epsilon, ATP5PF/subunit F6, ATP5PB/subunit b, ATP5PD/subunit d, ATP5PO/subunit OSCP. ATP synthase complex consists of a soluble F(1) head domain (subunits alpha(3) and beta(3)) - the catalytic core - and a membrane F(0) domain - the membrane proton channel (subunits c, a, 8, e, f, g, k and j). These two domains are linked by a central stalk (subunits gamma, delta, and epsilon) rotating inside the F1 region and a stationary peripheral stalk (subunits F6, b, d, and OSCP). Interacts with DNAJC30; interaction is direct.

Its subcellular location is the mitochondrion inner membrane. The catalysed reaction is H(+)(in) = H(+)(out). Its function is as follows. Subunit a, of the mitochondrial membrane ATP synthase complex (F(1)F(0) ATP synthase or Complex V) that produces ATP from ADP in the presence of a proton gradient across the membrane which is generated by electron transport complexes of the respiratory chain. ATP synthase complex consist of a soluble F(1) head domain - the catalytic core - and a membrane F(1) domain - the membrane proton channel. These two domains are linked by a central stalk rotating inside the F(1) region and a stationary peripheral stalk. During catalysis, ATP synthesis in the catalytic domain of F(1) is coupled via a rotary mechanism of the central stalk subunits to proton translocation. With the subunit c (ATP5MC1), forms the proton-conducting channel in the F(0) domain, that contains two crucial half-channels (inlet and outlet) that facilitate proton movement from the mitochondrial intermembrane space (IMS) into the matrix. Protons are taken up via the inlet half-channel and released through the outlet half-channel, following a Grotthuss mechanism. The chain is ATP synthase F(0) complex subunit a from Bos mutus grunniens (Wild yak).